Reading from the N-terminus, the 301-residue chain is Averufin oxidase A (301 aa).

Positions 1–23 are cleaved as a signal peptide; it reads MPTYALLGATGATGSAILRCLLA. N-linked (GlcNAc...) asparagine glycans are attached at residues Asn-62, Asn-86, and Asn-190.

Belongs to the avfA family.

The protein operates within mycotoxin biosynthesis. Averufin oxidase A; part of the fragmented gene cluster that mediates the biosynthesis of dothistromin (DOTH), a polyketide toxin very similar in structure to the aflatoxin precursor, versicolorin B. The first step of the pathway is the conversion of acetate to norsolorinic acid (NOR) and requires the fatty acid synthase subunits hexA and hexB, as well as the polyketide synthase pksA. PksA combines a hexanoyl starter unit and 7 malonyl-CoA extender units to synthesize the precursor NOR. The hexanoyl starter unit is provided to the acyl-carrier protein (ACP) domain by the fungal fatty acid synthase hexA/hexB. The second step is the conversion of NOR to averantin (AVN) and requires the norsolorinic acid ketoreductase nor1, which catalyzes the dehydration of norsolorinic acid to form (1'S)-averantin. The cytochrome P450 monooxygenase avnA then catalyzes the hydroxylation of AVN to 5'hydroxyaverantin (HAVN). The next step is performed by adhA that transforms HAVN to averufin (AVF). Averufin might then be converted to hydroxyversicolorone by cypX and avfA. Hydroxyversicolorone is further converted versiconal hemiacetal acetate (VHA) by moxY. VHA is then the substrate for the versiconal hemiacetal acetate esterase est1 to yield versiconal (VAL). Versicolorin B synthase vbsA then converts VAL to versicolorin B (VERB) by closing the bisfuran ring. Then, the activity of the versicolorin B desaturase verB leads to versicolorin A (VERA). DotB, a predicted chloroperoxidase, may perform epoxidation of the A-ring of VERA. Alternatively, a cytochrome P450, such as cypX or avnA could catalyze this step. It is also possible that another, uncharacterized, cytochrome P450 enzyme is responsible for this step. Opening of the epoxide could potentially be achieved by the epoxide hydrolase epoA. However, epoA seems not to be required for DOTH biosynthesis, but other epoxide hydrolases may have the ability to complement this hydrolysis. Alternatively, opening of the epoxide ring could be achieved non-enzymatically. The next step is the deoxygenation of ring A to yield the 5,8-dihydroxyanthraquinone which is most likely catalyzed by the NADPH dehydrogenase encoded by ver1. The last stages of DOTH biosynthesis are proposed to involve hydroxylation of the bisfuran. OrdB and norB might have oxidative roles here. An alternative possibility is that cytochrome P450 monoogenases such as avnA and cypX might perform these steps in addition to previously proposed steps. In Dothistroma septosporum (Red band needle blight fungus), this protein is Averufin oxidase A.